We begin with the raw amino-acid sequence, 408 residues long: FAD-dependent monooxygenase nscC (408 aa).

The signal sequence occupies residues 1–20 (MASRLPILIIGAGISGLTTA). Residues glutamate 34 and alanine 45 each contribute to the FAD site. N-linked (GlcNAc...) asparagine glycans are attached at residues asparagine 91 and asparagine 103. Arginine 119 serves as a coordination point for FAD. Asparagine 170 and asparagine 231 each carry an N-linked (GlcNAc...) asparagine glycan. FAD is bound by residues aspartate 328 and glycine 341.

The protein belongs to the paxM FAD-dependent monooxygenase family. Requires FAD as cofactor.

It functions in the pathway secondary metabolite biosynthesis. Functionally, FAD-dependent monooxygenase; part of the gene cluster that mediates the biosynthesis of neosartoricin, a prenylated anthracenone that exhibits T-cell antiproliferative activity, suggestive of a physiological role as an immunosuppressive agent. The non-reducing polyketide synthase nscA probably synthesizes and cyclizes the decaketide backbone. The hydrolase nscB then mediates the product release through hydrolysis followed by spontaneous decarboxylation. The prenyltransferase nscD catalyzes the addition of the dimethylallyl group to the aromatic C5. The FAD-dependent monooxygenase nscC is then responsible for the stereospecific hydroxylation at C2. There is no gene encoding O-acetyltransferase in the nsc gene cluster; thus, the last step of 2-O-acetylation leading to neosartoricin may be catalyzed by an unidentified O-acetyltransferase. This is FAD-dependent monooxygenase nscC from Aspergillus fumigatus (strain ATCC MYA-4609 / CBS 101355 / FGSC A1100 / Af293) (Neosartorya fumigata).